The following is a 171-amino-acid chain: Peptidyl-prolyl cis-trans isomerase 7 (171 aa).

In terms of domain architecture, PPIase cyclophilin-type spans 7–170 (FFDITIAGKP…SECLIADCGQ (164 aa)).

The protein belongs to the cyclophilin-type PPIase family.

It catalyses the reaction [protein]-peptidylproline (omega=180) = [protein]-peptidylproline (omega=0). PPIases accelerate the folding of proteins. It catalyzes the cis-trans isomerization of proline imidic peptide bonds in oligopeptides. This Caenorhabditis elegans protein is Peptidyl-prolyl cis-trans isomerase 7 (cyn-7).